Here is a 692-residue protein sequence, read N- to C-terminus: Protein arginine N-methyltransferase 7 (692 aa).

SAM-dependent MTase PRMT-type domains lie at 14 to 345 (SVEW…YCVW) and 358 to 684 (RVRQ…IIME). Arg32 carries the post-translational modification Omega-N-methylarginine. Residues Glu144 and Glu153 contribute to the active site.

The protein belongs to the class I-like SAM-binding methyltransferase superfamily. Protein arginine N-methyltransferase family. PRMT7 subfamily. As to quaternary structure, homodimer and heterodimer. Interacts with CTCFL. Interacts with PRMT5 and SNRPD3.

The protein resides in the cytoplasm. It localises to the cytosol. It is found in the nucleus. The enzyme catalyses L-arginyl-[protein] + S-adenosyl-L-methionine = N(omega)-methyl-L-arginyl-[protein] + S-adenosyl-L-homocysteine + H(+). Its function is as follows. Arginine methyltransferase that can both catalyze the formation of omega-N monomethylarginine (MMA) and symmetrical dimethylarginine (sDMA), with a preference for the formation of MMA. Specifically mediates the symmetrical dimethylation of arginine residues in the small nuclear ribonucleoproteins Sm D1 (SNRPD1) and Sm D3 (SNRPD3); such methylation being required for the assembly and biogenesis of snRNP core particles. Specifically mediates the symmetric dimethylation of histone H4 'Arg-3' to form H4R3me2s. Plays a role in gene imprinting by being recruited by CTCFL at the H19 imprinted control region (ICR) and methylating histone H4 to form H4R3me2s, possibly leading to recruit DNA methyltransferases at these sites. May also play a role in embryonic stem cell (ESC) pluripotency. Also able to mediate the arginine methylation of histone H2A and myelin basic protein (MBP) in vitro; the relevance of such results is however unclear in vivo. The polypeptide is Protein arginine N-methyltransferase 7 (PRMT7) (Homo sapiens (Human)).